A 1262-amino-acid polypeptide reads, in one-letter code: DNA-directed RNA polymerase subunit beta' (1262 aa).

Residues Cys220, Cys294, Cys301, and Cys304 each coordinate Zn(2+).

This sequence belongs to the RNA polymerase beta' chain family. RpoC2 subfamily. In cyanobacteria the RNAP catalytic core is composed of 2 alpha, 1 beta, 1 beta', 1 gamma and 1 omega subunit. When a sigma factor is associated with the core the holoenzyme is formed, which can initiate transcription. It depends on Zn(2+) as a cofactor.

It carries out the reaction RNA(n) + a ribonucleoside 5'-triphosphate = RNA(n+1) + diphosphate. In terms of biological role, DNA-dependent RNA polymerase catalyzes the transcription of DNA into RNA using the four ribonucleoside triphosphates as substrates. In Gloeobacter violaceus (strain ATCC 29082 / PCC 7421), this protein is DNA-directed RNA polymerase subunit beta'.